A 205-amino-acid polypeptide reads, in one-letter code: NADH dehydrogenase (205 aa).

FMN contacts are provided by residues 17-21 (RRSIR), Gln73, 158-159 (LG), and Arg195.

The protein belongs to the nitroreductase family. In terms of assembly, homodimer. FMN is required as a cofactor.

It catalyses the reaction a ubiquinone + NADH + 5 H(+)(in) = a ubiquinol + NAD(+) + 4 H(+)(out). Functionally, can oxidize either NADH or NADPH with a preference for NADH. Can catalyze electron transfer from NADH to various electron acceptors which include, in addition to molecular oxygen, cytochrome c, 2,6 dichlorphenolindophenol, methylene blue, ferricyanide or P-nitroblue tetrazolium. The sequence is that of NADH dehydrogenase (nox) from Thermus thermophilus (strain ATCC 27634 / DSM 579 / HB8).